The chain runs to 388 residues: P2X purinoceptor 4 (388 aa).

At 1–33 (MTGCCTVLGAFLFEYDTPRIVLIRSRKVGLMNR) the chain is on the cytoplasmic side. A helical membrane pass occupies residues 34-54 (TVQLLILAYVIGWVFVWEKGY). Over 55-338 (QETDSVVSSV…KFDIIPTMIN (284 aa)) the chain is Extracellular. ATP contacts are provided by Lys67 and Lys69. CTP-binding residues include Lys67 and Lys69. N-linked (GlcNAc...) asparagine glycosylation is found at Asn75, Asn110, Asn131, Asn153, and Asn184. Intrachain disulfides connect Cys116-Cys165, Cys126-Cys149, and Cys132-Cys159. ATP contacts are provided by Thr186 and Leu188. Thr186 serves as a coordination point for CTP. Asn199 and Asn208 each carry an N-linked (GlcNAc...) asparagine glycan. 2 disulfides stabilise this stretch: Cys217-Cys227 and Cys261-Cys270. Positions 293, 295, and 313 each coordinate ATP. Positions 293, 295, and 313 each coordinate CTP. A helical transmembrane segment spans residues 339–359 (IGSGLALLGVATVLCDVIVLY). Residues 360 to 388 (CMKKRYYYREKKYKYVEDYEQGLGNQMEQ) lie on the Cytoplasmic side of the membrane.

This sequence belongs to the P2X receptor family. Functional P2RXs are organized as homomeric and heteromeric trimers. Forms heterotrimer with P2RX1. Interacts with P2RX7 (via C-terminus); this interaction is functional only in the presence of ATP. Forms heterotrimer with P2RX4; functional differences between homomeric P2RX4 and P2RX4/6 heterotrimer are minor. Interacts with AP1M2.

The protein resides in the cell membrane. The protein localises to the lysosome membrane. The catalysed reaction is K(+)(in) = K(+)(out). It carries out the reaction Na(+)(in) = Na(+)(out). It catalyses the reaction Ca(2+)(in) = Ca(2+)(out). With respect to regulation, activated by ATP. pH-dependent and inhibited by acidic pH. Its function is as follows. ATP-gated nonselective transmembrane cation channel permeable to potassium, sodium and calcium. CTP, but not GTP or UTP, functions as a weak affinity agonist for P2RX4. Activated by extracellularly released ATP, it plays multiple role in immunity and central nervous system physiology. Could also function as an ATP-gated cation channel of lysosomal membranes. This is P2X purinoceptor 4 (P2RX4) from Bos taurus (Bovine).